A 311-amino-acid chain; its full sequence is Homoserine kinase (311 aa).

88-98 contributes to the ATP binding site; it reads PEGLGLGSSGA.

This sequence belongs to the GHMP kinase family. Homoserine kinase subfamily.

It is found in the cytoplasm. The enzyme catalyses L-homoserine + ATP = O-phospho-L-homoserine + ADP + H(+). The protein operates within amino-acid biosynthesis; L-threonine biosynthesis; L-threonine from L-aspartate: step 4/5. Functionally, catalyzes the ATP-dependent phosphorylation of L-homoserine to L-homoserine phosphate. The polypeptide is Homoserine kinase (Saccharolobus islandicus (strain Y.N.15.51 / Yellowstone #2) (Sulfolobus islandicus)).